The sequence spans 410 residues: Mating-type locus allele B4 protein (410 aa).

The tract at residues 1 to 110 (MSSDPKISIT…ANASSPVVGC (110 aa)) is variable domain between B alleles. A DNA-binding region (homeobox; TALE-type) is located at residues 107-184 (VVGCRELSED…NARRRSGWSH (78 aa)). A highly conserved between B alleles region spans residues 111–410 (RELSEDLPAY…PFLCLSVAFV (300 aa)). 3 disordered regions span residues 202–241 (RAKLSSSNQSTPPSPTSEYPSNNLDDFLSDNLGRPLTPAD), 278–335 (TPKP…TPEL), and 375–394 (RGNRKVKALPKRAGKQQPDE). Positions 206–222 (SSSNQSTPPSPTSEYPS) are enriched in low complexity. Positions 276-308 (KKTPKPGMPRPVTTVAKRQPARKTKPAAKPKSR) match the Nuclear localization signal motif. A compositionally biased stretch (basic residues) spans 294–307 (QPARKTKPAAKPKS). Over residues 312 to 335 (PRASTTPSIDSTLDSSKLESTPEL) the composition is skewed to polar residues. Positions 333–410 (PELSMCSTAD…PFLCLSVAFV (78 aa)) are not essential for B4 function. Basic residues predominate over residues 375-388 (RGNRKVKALPKRAG).

It belongs to the TALE/M-ATYP homeobox family.

The protein resides in the nucleus. The B locus has at least 25 alleles, and any combination of two different B alleles yields a multimeric regulatory protein, that activates genes responsible for the pathogenicity and for the sexual development of the fungus within the corn plant. This is Mating-type locus allele B4 protein from Mycosarcoma maydis (Corn smut fungus).